A 198-amino-acid chain; its full sequence is Dephospho-CoA kinase (198 aa).

Residues 4-198 enclose the DPCK domain; that stretch reads FLGLTGGIAS…LSDLLQEIGR (195 aa). 12 to 17 contributes to the ATP binding site; sequence ASGKST.

It belongs to the CoaE family.

The protein localises to the cytoplasm. It catalyses the reaction 3'-dephospho-CoA + ATP = ADP + CoA + H(+). It participates in cofactor biosynthesis; coenzyme A biosynthesis; CoA from (R)-pantothenate: step 5/5. Functionally, catalyzes the phosphorylation of the 3'-hydroxyl group of dephosphocoenzyme A to form coenzyme A. This Lactobacillus johnsonii (strain CNCM I-12250 / La1 / NCC 533) protein is Dephospho-CoA kinase.